Consider the following 1259-residue polypeptide: Protein flightless-1 homolog (1259 aa).

15 LRR repeats span residues 7-32 (LPFI…VKSM), 33-55 (TSLR…LASL), 56-78 (QKLE…LSSL), 80-103 (NLRA…IFQL), 104-126 (DDLS…LENS), 128-149 (NMLV…LFIN), 150-173 (LTDL…MRRL), 176-201 (LQTL…VSLQ), 222-245 (LSNL…LYSL), 247-268 (NLKR…IDQW), 269-291 (TKLE…ICKL), 293-316 (KLKK…VGKL), 317-339 (SNLV…LCRC), 340-363 (GKLK…HFLT), and 365-385 (LEVL…PVDR). Gelsolin-like repeat units lie at residues 509-589 (IPIQ…SEEF), 628-702 (NIRL…PEFW), 757-830 (DVVP…CQVF), and 1170-1225 (EKCS…RSKD).

In terms of tissue distribution, expressed in ventricular cardiomyocytes, where it particularly localizes to intercalated disks and costamere-like structures (at protein level).

The protein localises to the nucleus. The protein resides in the cytoplasm. Its subcellular location is the cytoskeleton. It localises to the microtubule organizing center. It is found in the centrosome. The protein localises to the cell junction. The protein resides in the focal adhesion. In terms of biological role, is a regulator of actin polymerization, required for proper myofibril organization and the assembly of cardiomyocyte cell adhesion complexes. Is a regulator of the length of sarcomeric thin filaments. Regulates cytoskeletal rearrangements involved in cytokinesis and cell migration, by inhibiting Rac1-dependent paxillin phosphorylation. May play a role as coactivator in transcriptional activation by hormone-activated nuclear receptors (NR) and acts in cooperation with NCOA2 and CARM1. Involved in estrogen hormone signaling. This Danio rerio (Zebrafish) protein is Protein flightless-1 homolog.